An 80-amino-acid chain; its full sequence is Mitotic-spindle organizing protein 1 (80 aa).

It belongs to the MOZART1 family. Part of the gamma-tubulin complex.

The protein resides in the cytoplasm. It is found in the cytoskeleton. Its subcellular location is the microtubule organizing center. It localises to the spindle pole body. Required for gamma-tubulin complex recruitment to the microtubule organizing center (MTOC). This Pyricularia oryzae (strain 70-15 / ATCC MYA-4617 / FGSC 8958) (Rice blast fungus) protein is Mitotic-spindle organizing protein 1.